We begin with the raw amino-acid sequence, 286 residues long: Release factor glutamine methyltransferase (286 aa).

S-adenosyl-L-methionine is bound by residues Asp148 and Asn194. 194-197 (NPPY) contacts substrate.

The protein belongs to the protein N5-glutamine methyltransferase family. PrmC subfamily.

It carries out the reaction L-glutaminyl-[peptide chain release factor] + S-adenosyl-L-methionine = N(5)-methyl-L-glutaminyl-[peptide chain release factor] + S-adenosyl-L-homocysteine + H(+). In terms of biological role, methylates the class 1 translation termination release factors RF1/PrfA and RF2/PrfB on the glutamine residue of the universally conserved GGQ motif. The polypeptide is Release factor glutamine methyltransferase (Leptospira interrogans serogroup Icterohaemorrhagiae serovar Lai (strain 56601)).